A 270-amino-acid chain; its full sequence is Hydroxyethylthiazole kinase (270 aa).

A substrate-binding site is contributed by Met44. 2 residues coordinate ATP: Arg119 and Thr165. Gly192 serves as a coordination point for substrate.

The protein belongs to the Thz kinase family. It depends on Mg(2+) as a cofactor.

The enzyme catalyses 5-(2-hydroxyethyl)-4-methylthiazole + ATP = 4-methyl-5-(2-phosphooxyethyl)-thiazole + ADP + H(+). It functions in the pathway cofactor biosynthesis; thiamine diphosphate biosynthesis; 4-methyl-5-(2-phosphoethyl)-thiazole from 5-(2-hydroxyethyl)-4-methylthiazole: step 1/1. Functionally, catalyzes the phosphorylation of the hydroxyl group of 4-methyl-5-beta-hydroxyethylthiazole (THZ). In Corynebacterium efficiens (strain DSM 44549 / YS-314 / AJ 12310 / JCM 11189 / NBRC 100395), this protein is Hydroxyethylthiazole kinase.